Consider the following 141-residue polypeptide: Large ribosomal subunit protein uL16c (141 aa).

Over residues 1 to 17 (MLSPKRTKYRKPHRGNR) the composition is skewed to basic residues. Positions 1-21 (MLSPKRTKYRKPHRGNRKGQA) are disordered.

This sequence belongs to the universal ribosomal protein uL16 family. In terms of assembly, part of the 50S ribosomal subunit.

The protein resides in the plastid. Its subcellular location is the chloroplast. The protein is Large ribosomal subunit protein uL16c of Ostreococcus tauri.